A 101-amino-acid chain; its full sequence is Glutaredoxin-1 (101 aa).

In terms of domain architecture, Glutaredoxin spans 5–101 (KDRVEKLIQT…GSLSKMIAAL (97 aa)). Cys25 and Cys28 are joined by a disulfide.

Belongs to the glutaredoxin family.

The protein resides in the cytoplasm. It is found in the cytosol. Multifunctional enzyme with glutathione-dependent oxidoreductase, glutathione peroxidase and glutathione S-transferase (GST) activity. The disulfide bond functions as an electron carrier in the glutathione-dependent synthesis of deoxyribonucleotides by the enzyme ribonucleotide reductase. In addition, it is also involved in reducing cytosolic protein- and non-protein-disulfides in a coupled system with glutathione reductase. May play a role in protection against oxidative stress caused by superoxide in vivo by regulating the redox state of the protein sulfhydryl groups. The protein is Glutaredoxin-1 of Rhizophagus irregularis (strain DAOM 181602 / DAOM 197198 / MUCL 43194) (Arbuscular mycorrhizal fungus).